The chain runs to 411 residues: Dihydrolipoyllysine-residue succinyltransferase component of 2-oxoglutarate dehydrogenase complex (411 aa).

The Lipoyl-binding domain maps to T2–E77. K43 is modified (N6-lipoyllysine). Low complexity predominate over residues S82 to E100. Residues S82–S115 form a disordered region. Over residues L101 to M110 the composition is skewed to polar residues. The Peripheral subunit-binding (PSBD) domain maps to P111–L148. Active-site residues include H382 and D386.

This sequence belongs to the 2-oxoacid dehydrogenase family. As to quaternary structure, forms a 24-polypeptide structural core with octahedral symmetry. Part of the 2-oxoglutarate dehydrogenase (OGDH) complex composed of E1 (2-oxoglutarate dehydrogenase), E2 (dihydrolipoamide succinyltransferase) and E3 (dihydrolipoamide dehydrogenase); the complex contains multiple copies of the three enzymatic components (E1, E2 and E3). It depends on (R)-lipoate as a cofactor.

The enzyme catalyses N(6)-[(R)-dihydrolipoyl]-L-lysyl-[protein] + succinyl-CoA = N(6)-[(R)-S(8)-succinyldihydrolipoyl]-L-lysyl-[protein] + CoA. The protein operates within amino-acid degradation; L-lysine degradation via saccharopine pathway; glutaryl-CoA from L-lysine: step 6/6. In terms of biological role, E2 component of the 2-oxoglutarate dehydrogenase (OGDH) complex which catalyzes the second step in the conversion of 2-oxoglutarate to succinyl-CoA and CO(2). In Bartonella vinsonii subsp. berkhoffii, this protein is Dihydrolipoyllysine-residue succinyltransferase component of 2-oxoglutarate dehydrogenase complex (sucB).